The following is a 255-amino-acid chain: Ribonuclease HII (255 aa).

Positions 58–247 constitute an RNase H type-2 domain; the sequence is RYIAGIDEAG…VKSMVLGARY (190 aa). Residues Asp-64, Glu-65, and Asp-156 each coordinate a divalent metal cation.

It belongs to the RNase HII family. Requires Mn(2+) as cofactor. Mg(2+) serves as cofactor.

It localises to the cytoplasm. The enzyme catalyses Endonucleolytic cleavage to 5'-phosphomonoester.. Functionally, endonuclease that specifically degrades the RNA of RNA-DNA hybrids. The sequence is that of Ribonuclease HII from Syntrophomonas wolfei subsp. wolfei (strain DSM 2245B / Goettingen).